The chain runs to 872 residues: Protein translocase subunit SecA (872 aa).

ATP contacts are provided by residues glutamine 87, 105–109, and aspartate 510; that span reads GEGKT. Zn(2+) contacts are provided by cysteine 847, cysteine 849, cysteine 858, and cysteine 859.

It belongs to the SecA family. As to quaternary structure, monomer and homodimer. Part of the essential Sec protein translocation apparatus which comprises SecA, SecYEG and auxiliary proteins SecDF-YajC and YidC. Zn(2+) is required as a cofactor.

The protein localises to the cell inner membrane. The protein resides in the cytoplasm. It catalyses the reaction ATP + H2O + cellular proteinSide 1 = ADP + phosphate + cellular proteinSide 2.. Functionally, part of the Sec protein translocase complex. Interacts with the SecYEG preprotein conducting channel. Has a central role in coupling the hydrolysis of ATP to the transfer of proteins into and across the cell membrane, serving as an ATP-driven molecular motor driving the stepwise translocation of polypeptide chains across the membrane. This chain is Protein translocase subunit SecA, found in Aliarcobacter butzleri (strain RM4018) (Arcobacter butzleri).